The chain runs to 4250 residues: Dynein axonemal heavy chain 1 (4250 aa).

The interval 1–73 is disordered; the sequence is MEECNKEGPS…KSPLTGTDKK (73 aa). Residues 1–1527 are stem; sequence MEECNKEGPS…YIRAVNAEFI (1527 aa). The segment covering 24–42 has biased composition (basic and acidic residues); the sequence is PESHDLEKILQESNYHPER. Residues 46–55 show a composition bias toward pro residues; the sequence is NPDPKTPPLP. 4 AAA regions span residues 1528 to 1749, 1809 to 2042, 2174 to 2434, and 2532 to 2784; these read YGYE…VISA, QAIR…NTVK, TMMP…VFQG, and DYNQ…LARH. The short motif at 1566–1573 is the GPAGTGKT motif element; it reads GPAGTGKT. ATP is bound at residue 1566–1573; sequence GPAGTGKT. The CFDEFNR motif motif lies at 1616-1622; that stretch reads CFDEFNR. Residues 1847 to 1854, 2212 to 2219, and 2571 to 2578 contribute to the ATP site; these read GPTGSGKS, GPTGTGKT, and GVGGSGRS. The stalk stretch occupies residues 2799 to 3097; it reads FSILIGQKKM…EELEMKCEQC (299 aa). A coiled-coil region spans residues 3045–3128; the sequence is LREAQDDLEV…QETVENLENM (84 aa). 2 AAA regions span residues 3182-3412 and 3625-3844; these read LGNP…EIQA and MQDF…QLKM.

It belongs to the dynein heavy chain family. In terms of assembly, consists of at least two heavy chains and a number of intermediate and light chains.

It localises to the cytoplasm. The protein resides in the cytoskeleton. Its subcellular location is the cilium axoneme. It is found in the cell projection. The protein localises to the cilium. It localises to the flagellum. Its function is as follows. Force generating protein of cilia required for sperm flagellum motility. Produces force towards the minus ends of microtubules. Dynein has ATPase activity; the force-producing power stroke is thought to occur on release of ADP. Required in spermatozoa for the formation of the inner dynein arms and biogenesis of the axoneme. The sequence is that of Dynein axonemal heavy chain 1 from Mus musculus (Mouse).